We begin with the raw amino-acid sequence, 365 residues long: Serine/threonine-protein kinase SAPK6 (365 aa).

Residues 4-260 form the Protein kinase domain; it reads YELLKDIGSG…IREIRNHPWF (257 aa). ATP contacts are provided by residues 10 to 18 and lysine 33; that span reads IGSGNFGVA. Aspartate 123 (proton acceptor) is an active-site residue. Residues 298 to 365 are disordered; sequence VQEAKTPPPS…AHASCDLQKS (68 aa). A compositionally biased stretch (acidic residues) spans 317–347; the sequence is TEEEEQEDGKNPDDDEGDRDEEEGEEGDSED.

Belongs to the protein kinase superfamily. Ser/Thr protein kinase family. Interacts with BZIP46. May be phosphorylated. Expressed in leaf blades and leaf sheaths. Expressed in shoots and roots of young seedlings.

It catalyses the reaction L-seryl-[protein] + ATP = O-phospho-L-seryl-[protein] + ADP + H(+). It carries out the reaction L-threonyl-[protein] + ATP = O-phospho-L-threonyl-[protein] + ADP + H(+). Its activity is regulated as follows. Activated by hyperosmotic stress. Its function is as follows. May play a role in signal transduction of hyperosmotic response. Can phosphorylate ABI5 in vitro. Can phosphorylate BZIP46 in vitro. In Oryza sativa subsp. japonica (Rice), this protein is Serine/threonine-protein kinase SAPK6.